Consider the following 510-residue polypeptide: NAD(P)H-quinone oxidoreductase subunit 2 A, chloroplastic (510 aa).

The next 12 membrane-spanning stretches (helical) occupy residues 31-51 (FIFP…IDLT), 59-79 (WFYF…LFRW), 99-119 (IFQF…VEYI), 124-144 (MAIT…MFLC), 149-169 (LITI…LSGY), 183-203 (YLLM…WLYG), 229-249 (ISIA…PAPF), 295-315 (WHLL…LLAI), 323-343 (MLAY…IVGD), 354-374 (YMLF…LFGL), 395-415 (ALSL…AGFF), and 418-438 (LYLF…IGLL).

Belongs to the complex I subunit 2 family. NDH is composed of at least 16 different subunits, 5 of which are encoded in the nucleus.

The protein resides in the plastid. Its subcellular location is the chloroplast thylakoid membrane. The catalysed reaction is a plastoquinone + NADH + (n+1) H(+)(in) = a plastoquinol + NAD(+) + n H(+)(out). The enzyme catalyses a plastoquinone + NADPH + (n+1) H(+)(in) = a plastoquinol + NADP(+) + n H(+)(out). In terms of biological role, NDH shuttles electrons from NAD(P)H:plastoquinone, via FMN and iron-sulfur (Fe-S) centers, to quinones in the photosynthetic chain and possibly in a chloroplast respiratory chain. The immediate electron acceptor for the enzyme in this species is believed to be plastoquinone. Couples the redox reaction to proton translocation, and thus conserves the redox energy in a proton gradient. This Saccharum officinarum (Sugarcane) protein is NAD(P)H-quinone oxidoreductase subunit 2 A, chloroplastic.